Here is a 156-residue protein sequence, read N- to C-terminus: ATP synthase subunit b (156 aa).

A helical membrane pass occupies residues 11-31; the sequence is LIAFALFVWFCMKFVWPPIIN.

It belongs to the ATPase B chain family. In terms of assembly, F-type ATPases have 2 components, F(1) - the catalytic core - and F(0) - the membrane proton channel. F(1) has five subunits: alpha(3), beta(3), gamma(1), delta(1), epsilon(1). F(0) has three main subunits: a(1), b(2) and c(10-14). The alpha and beta chains form an alternating ring which encloses part of the gamma chain. F(1) is attached to F(0) by a central stalk formed by the gamma and epsilon chains, while a peripheral stalk is formed by the delta and b chains.

The protein resides in the cell inner membrane. In terms of biological role, f(1)F(0) ATP synthase produces ATP from ADP in the presence of a proton or sodium gradient. F-type ATPases consist of two structural domains, F(1) containing the extramembraneous catalytic core and F(0) containing the membrane proton channel, linked together by a central stalk and a peripheral stalk. During catalysis, ATP synthesis in the catalytic domain of F(1) is coupled via a rotary mechanism of the central stalk subunits to proton translocation. Its function is as follows. Component of the F(0) channel, it forms part of the peripheral stalk, linking F(1) to F(0). This chain is ATP synthase subunit b, found in Haemophilus influenzae (strain PittGG).